Reading from the N-terminus, the 89-residue chain is Acylphosphatase (89 aa).

Positions 3–89 (ALFIKISGRV…QNFTSFDIVP (87 aa)) constitute an Acylphosphatase-like domain. Catalysis depends on residues R18 and N36.

This sequence belongs to the acylphosphatase family.

The enzyme catalyses an acyl phosphate + H2O = a carboxylate + phosphate + H(+). The chain is Acylphosphatase (acyP) from Pseudothermotoga lettingae (strain ATCC BAA-301 / DSM 14385 / NBRC 107922 / TMO) (Thermotoga lettingae).